The following is a 369-amino-acid chain: Replication factor C subunit 5 (369 aa).

Residues 21-40 form a disordered region; it reads INKGKDVVGFGPPPQSKATP. Residue 79 to 86 participates in ATP binding; the sequence is GPPGTGKT.

It belongs to the activator 1 small subunits family. Heterotetramer of subunits RFC2, RFC3, RFC4 and RFC5 that can form a complex with RFC1.

It localises to the nucleus. Functions in cell replication and proliferation. May be involved in chromatin assembly and remodeling. Plays a role in the negative control of pathogenesis-related gene expression and systemic acquired resistance (SAR). This Arabidopsis thaliana (Mouse-ear cress) protein is Replication factor C subunit 5 (RFC5).